The sequence spans 226 residues: Membrane protein (226 aa).

The Virion surface portion of the chain corresponds to 1 to 11 (MSNGSIPVDEV). The helical transmembrane segment at 12–32 (IEHLRNWNFTWNIILTILLVV) threads the bilayer. Topologically, residues 33–41 (LQYGHYKYS) are intravirion. A helical membrane pass occupies residues 42 to 62 (VFLYGVKMAILWILWPLVLAL). Residues 63-75 (SLFDAWASFQVNW) lie on the Virion surface side of the membrane. Residues 76 to 96 (VFFAFSILMACITLMLWIMYF) form a helical membrane-spanning segment. The Intravirion portion of the chain corresponds to 97–226 (VNSIRLWRRT…TDSEKVLHLV (130 aa)). The segment at 200–216 (RSKHGDYSAVSNPSAVL) is interaction with N protein.

This sequence belongs to the alphacoronaviruses M protein family. As to quaternary structure, homomultimer. Interacts with envelope E protein in the budding compartment of the host cell, which is located between endoplasmic reticulum and the Golgi complex. Forms a complex with HE and S proteins. Interacts with nucleocapsid N protein. This interaction probably participates in RNA packaging into the virus.

It localises to the virion membrane. Its subcellular location is the host Golgi apparatus membrane. In terms of biological role, component of the viral envelope that plays a central role in virus morphogenesis and assembly via its interactions with other viral proteins. This is Membrane protein from Sus scrofa (Pig).